Consider the following 457-residue polypeptide: Cytochrome b-c1 complex subunit 1, mitochondrial (457 aa).

A mitochondrion-targeting transit peptide spans 1 to 26 (MLRTVTSKTVSNQFKRSLATAVATPK).

This sequence belongs to the peptidase M16 family. UQCRC1/QCR1 subfamily. In terms of assembly, component of the ubiquinol-cytochrome c oxidoreductase (cytochrome b-c1 complex, complex III, CIII), a multisubunit enzyme composed of 10 subunits. The complex is composed of 3 respiratory subunits cytochrome b (COB), cytochrome c1 (CYT1) and Rieske protein (RIP1), 2 core protein subunits COR1 and QCR2, and 5 low-molecular weight protein subunits QCR6, QCR7, QCR8, QCR9 and QCR10. The complex exists as an obligatory dimer and forms supercomplexes (SCs) in the inner mitochondrial membrane with a monomer or a dimer of cytochrome c oxidase (complex IV, CIV), resulting in 2 different assemblies (supercomplexes III(2)IV and III(2)IV(2)). COR1 interacts with COX5A at the CIII-CIV interface.

Its subcellular location is the mitochondrion inner membrane. In terms of biological role, component of the ubiquinol-cytochrome c oxidoreductase, a multisubunit transmembrane complex that is part of the mitochondrial electron transport chain which drives oxidative phosphorylation. The respiratory chain contains 3 multisubunit complexes succinate dehydrogenase (complex II, CII), ubiquinol-cytochrome c oxidoreductase (cytochrome b-c1 complex, complex III, CIII) and cytochrome c oxidase (complex IV, CIV), that cooperate to transfer electrons derived from NADH and succinate to molecular oxygen, creating an electrochemical gradient over the inner membrane that drives transmembrane transport and the ATP synthase. The cytochrome b-c1 complex catalyzes electron transfer from ubiquinol to cytochrome c, linking this redox reaction to translocation of protons across the mitochondrial inner membrane, with protons being carried across the membrane as hydrogens on the quinol. In the process called Q cycle, 2 protons are consumed from the matrix, 4 protons are released into the intermembrane space and 2 electrons are passed to cytochrome c. This is Cytochrome b-c1 complex subunit 1, mitochondrial (COR1) from Saccharomyces cerevisiae (strain ATCC 204508 / S288c) (Baker's yeast).